Here is a 364-residue protein sequence, read N- to C-terminus: MMMMMRRAFRHLARQQRRPLSHVPESAVYGGPRPQDVGAAAGAGAGAGATRRVTVTTLRGKHRRGEPITVVTAYDYPSAVHVDSAGIDVCLVGDSAAMVVHGHDTTLPISLDVMLEHCRAVARGATRPLLVGDLPFGCYESSSTRAVDSAVRVLKEGGMDAIKLEGGAPSRISAAKAIVEAGIAVMGHVGLTPQAISVLGGFRPQGKTVDSAVKVVETALALQEAGCFSVVLECVPAPVAAAATSALQIPTIGIGAGPFCSGQVLVYHDLLGMMQHPHHAKVTPKFCKQFGNVGHVINKALSEYKQEVETRSFPGPSHTPYKIAAADVDGFANALQKMGLDEAANAAAAAAENAEKDGELPENK.

Residues 1–59 (MMMMMRRAFRHLARQQRRPLSHVPESAVYGGPRPQDVGAAAGAGAGAGATRRVTVTTLR) constitute a mitochondrion transit peptide. 2 residues coordinate Mg(2+): aspartate 94 and aspartate 133. 3-methyl-2-oxobutanoate-binding positions include 94-95 (DS), aspartate 133, and lysine 163. Position 165 (glutamate 165) interacts with Mg(2+). Residue glutamate 233 is the Proton acceptor of the active site.

The protein belongs to the PanB family. It depends on Mg(2+) as a cofactor.

The protein localises to the mitochondrion. The catalysed reaction is 3-methyl-2-oxobutanoate + (6R)-5,10-methylene-5,6,7,8-tetrahydrofolate + H2O = 2-dehydropantoate + (6S)-5,6,7,8-tetrahydrofolate. Its pathway is cofactor biosynthesis; (R)-pantothenate biosynthesis; (R)-pantoate from 3-methyl-2-oxobutanoate: step 1/2. Catalyzes the reversible reaction in which hydroxymethyl group from 5,10-methylenetetrahydrofolate is transferred onto alpha-ketoisovalerate to form ketopantoate. In Oryza sativa subsp. japonica (Rice), this protein is 3-methyl-2-oxobutanoate hydroxymethyltransferase 1, mitochondrial (KPHMT1).